A 423-amino-acid polypeptide reads, in one-letter code: 4-hydroxy-3-methylbut-2-en-1-yl diphosphate synthase (flavodoxin) (423 aa).

Residues cysteine 307, cysteine 310, cysteine 353, and glutamate 360 each coordinate [4Fe-4S] cluster.

Belongs to the IspG family. Requires [4Fe-4S] cluster as cofactor.

The enzyme catalyses (2E)-4-hydroxy-3-methylbut-2-enyl diphosphate + oxidized [flavodoxin] + H2O + 2 H(+) = 2-C-methyl-D-erythritol 2,4-cyclic diphosphate + reduced [flavodoxin]. The protein operates within isoprenoid biosynthesis; isopentenyl diphosphate biosynthesis via DXP pathway; isopentenyl diphosphate from 1-deoxy-D-xylulose 5-phosphate: step 5/6. Converts 2C-methyl-D-erythritol 2,4-cyclodiphosphate (ME-2,4cPP) into 1-hydroxy-2-methyl-2-(E)-butenyl 4-diphosphate. The protein is 4-hydroxy-3-methylbut-2-en-1-yl diphosphate synthase (flavodoxin) of Brucella anthropi (strain ATCC 49188 / DSM 6882 / CCUG 24695 / JCM 21032 / LMG 3331 / NBRC 15819 / NCTC 12168 / Alc 37) (Ochrobactrum anthropi).